We begin with the raw amino-acid sequence, 102 residues long: Small ribosomal subunit protein uS10 (102 aa).

Belongs to the universal ribosomal protein uS10 family. Part of the 30S ribosomal subunit.

Functionally, involved in the binding of tRNA to the ribosomes. This is Small ribosomal subunit protein uS10 from Myxococcus xanthus (strain DK1622).